Here is a 351-residue protein sequence, read N- to C-terminus: MTIDAALAEQIRRTPKAELHVHIEGTLEPELIFRLAQRNQVALPYPSVDALRAAYAFTDLQSFLDIYYAGASVLLTEEDFFDMTMDYVKRAVADNVRHAEIFFDPQTHTARGVPIGVVIDGIADALAQARTEYDFSSSLILCFLRHLSEEDAFATLEAALPYRDRFVGVGLDSSEKGNPPEKFARVFARARELGLHLVAHAGEEGPAQYVADALDILKAERIDHGVRAIDDAALVERLARERVALTVCPLSNVKLKVYPDLRDHPLKRMLDAGVAITLHSDDPAYFGGYMNANWEATFDALPLDAADAHKLARNSFEAAFLPAMQKAEFLAEVDHFWSAPPKSPPATAPAA.

Positions 20, 22, and 200 each coordinate Zn(2+). The Proton donor role is filled by glutamate 203. Aspartate 281 provides a ligand contact to Zn(2+). Substrate is bound at residue aspartate 282.

This sequence belongs to the metallo-dependent hydrolases superfamily. Adenosine and AMP deaminases family. Adenine deaminase type 2 subfamily. Zn(2+) serves as cofactor.

The enzyme catalyses adenine + H2O + H(+) = hypoxanthine + NH4(+). Catalyzes the hydrolytic deamination of adenine to hypoxanthine. Plays an important role in the purine salvage pathway and in nitrogen catabolism. In Cupriavidus taiwanensis (strain DSM 17343 / BCRC 17206 / CCUG 44338 / CIP 107171 / LMG 19424 / R1) (Ralstonia taiwanensis (strain LMG 19424)), this protein is Adenine deaminase.